The following is a 45-amino-acid chain: Mu-conotoxin-like Cal 12.1.1d (45 aa).

4 disulfide bridges follow: C3/C16, C11/C28, C18/C33, and C27/C39. The residue at position 17 (W17) is a 6'-bromotryptophan. 4-carboxyglutamate is present on E21. P23 carries the 4-hydroxyproline modification. A 6'-bromotryptophan mark is found at W37 and W38. Residue P40 is modified to 4-hydroxyproline. W44 carries the 6'-bromotryptophan modification.

As to expression, expressed by the venom duct.

It is found in the secreted. Functionally, mu-conotoxins block voltage-gated sodium channels. This toxin reversibly blocks voltage-gated sodium channel in cephalopods, with no alteration in the voltage dependence of sodium conductance or on the kinetics of inactivation. The chain is Mu-conotoxin-like Cal 12.1.1d from Californiconus californicus (California cone).